Reading from the N-terminus, the 300-residue chain is Very-long-chain enoyl-CoA reductase (300 aa).

The helical transmembrane segment at 91–111 threads the bilayer; that stretch reads SLVFICEYAGPLFVYPIFYFL. Residue Asn-163 is glycosylated (N-linked (GlcNAc...) asparagine). A helical transmembrane segment spans residues 191–211; the sequence is VYLGLGLWIIGEVFNYICHIQ. N-linked (GlcNAc...) asparagine glycosylation is present at Asn-238. A helical transmembrane segment spans residues 243–263; sequence ILSWIGFSILTQTLTSWIFAL.

The protein belongs to the steroid 5-alpha reductase family.

The protein resides in the endoplasmic reticulum membrane. The enzyme catalyses a very-long-chain 2,3-saturated fatty acyl-CoA + NADP(+) = a very-long-chain (2E)-enoyl-CoA + NADPH + H(+). The protein operates within lipid metabolism; fatty acid biosynthesis. In terms of biological role, catalyzes the last of the four reactions of the long-chain fatty acids elongation cycle. This endoplasmic reticulum-bound enzymatic process, allows the addition of 2 carbons to the chain of long- and very long-chain fatty acids/VLCFAs per cycle. This enzyme reduces the trans-2,3-enoyl-CoA fatty acid intermediate to an acyl-CoA that can be further elongated by entering a new cycle of elongation. Thereby, it participates in the production of VLCFAs of different chain lengths that are involved in multiple biological processes as precursors of membrane lipids and lipid mediators. This chain is Very-long-chain enoyl-CoA reductase (gpsn2), found in Dictyostelium discoideum (Social amoeba).